The sequence spans 101 residues: Large ribosomal subunit protein eL43 (101 aa).

The segment at Cys-40–Cys-62 adopts a C4-type zinc-finger fold.

Belongs to the eukaryotic ribosomal protein eL43 family. Zn(2+) serves as cofactor.

The sequence is that of Large ribosomal subunit protein eL43 from Pyrobaculum neutrophilum (strain DSM 2338 / JCM 9278 / NBRC 100436 / V24Sta) (Thermoproteus neutrophilus).